The chain runs to 255 residues: Type III pantothenate kinase (255 aa).

6–13 (DIGNTNTV) is a binding site for ATP. Residues Tyr-100 and 107 to 110 (GADR) contribute to the substrate site. Asp-109 serves as the catalytic Proton acceptor. Asp-129 is a binding site for K(+). An ATP-binding site is contributed by Thr-132. Thr-185 is a substrate binding site.

Belongs to the type III pantothenate kinase family. In terms of assembly, homodimer. Requires NH4(+) as cofactor. K(+) is required as a cofactor.

It is found in the cytoplasm. The enzyme catalyses (R)-pantothenate + ATP = (R)-4'-phosphopantothenate + ADP + H(+). Its pathway is cofactor biosynthesis; coenzyme A biosynthesis; CoA from (R)-pantothenate: step 1/5. In terms of biological role, catalyzes the phosphorylation of pantothenate (Pan), the first step in CoA biosynthesis. This chain is Type III pantothenate kinase, found in Desulfosudis oleivorans (strain DSM 6200 / JCM 39069 / Hxd3) (Desulfococcus oleovorans).